Reading from the N-terminus, the 311-residue chain is tRNA-cytidine(32) 2-sulfurtransferase (311 aa).

A PP-loop motif motif is present at residues 47–52 (SGGKDS). [4Fe-4S] cluster-binding residues include C122, C125, and C213.

The protein belongs to the TtcA family. Homodimer. Requires Mg(2+) as cofactor. The cofactor is [4Fe-4S] cluster.

The protein resides in the cytoplasm. The enzyme catalyses cytidine(32) in tRNA + S-sulfanyl-L-cysteinyl-[cysteine desulfurase] + AH2 + ATP = 2-thiocytidine(32) in tRNA + L-cysteinyl-[cysteine desulfurase] + A + AMP + diphosphate + H(+). Its pathway is tRNA modification. Catalyzes the ATP-dependent 2-thiolation of cytidine in position 32 of tRNA, to form 2-thiocytidine (s(2)C32). The sulfur atoms are provided by the cysteine/cysteine desulfurase (IscS) system. This Citrobacter koseri (strain ATCC BAA-895 / CDC 4225-83 / SGSC4696) protein is tRNA-cytidine(32) 2-sulfurtransferase.